We begin with the raw amino-acid sequence, 189 residues long: Potassium-transporting ATPase KdpC subunit (189 aa).

Residues 6–26 (PAILFFIVFTILCGGVYPAVV) form a helical membrane-spanning segment.

Belongs to the KdpC family. In terms of assembly, the system is composed of three essential subunits: KdpA, KdpB and KdpC.

The protein resides in the cell inner membrane. Part of the high-affinity ATP-driven potassium transport (or Kdp) system, which catalyzes the hydrolysis of ATP coupled with the electrogenic transport of potassium into the cytoplasm. This subunit acts as a catalytic chaperone that increases the ATP-binding affinity of the ATP-hydrolyzing subunit KdpB by the formation of a transient KdpB/KdpC/ATP ternary complex. This is Potassium-transporting ATPase KdpC subunit from Geotalea uraniireducens (strain Rf4) (Geobacter uraniireducens).